Here is a 338-residue protein sequence, read N- to C-terminus: Probable tRNA pseudouridine synthase B (338 aa).

The active-site Nucleophile is the Asp78. Residues 245–320 (LPKIILRDSA…LAATSVRIMM (76 aa)) form the PUA domain.

The protein belongs to the pseudouridine synthase TruB family. Type 2 subfamily.

The enzyme catalyses uridine(55) in tRNA = pseudouridine(55) in tRNA. In terms of biological role, could be responsible for synthesis of pseudouridine from uracil-55 in the psi GC loop of transfer RNAs. This Methanosarcina barkeri (strain Fusaro / DSM 804) protein is Probable tRNA pseudouridine synthase B.